A 650-amino-acid polypeptide reads, in one-letter code: Hemocyanin subunit 2 (650 aa).

O-linked (GalNAc...) serine glycosylation is found at Ser120 and Ser172. Residues His193, His197, and His225 each coordinate Cu cation. An N-linked (GlcNAc...) asparagine glycan is attached at Asn309. Positions 344, 348, and 384 each coordinate Cu cation.

It belongs to the tyrosinase family. Hemocyanin subfamily. In terms of assembly, hexamer of a number of different chains, of which five have been identified. Contains one N-glycosylated and three O-glycosylated residues. The position of one of the O-glycosylated residues has not been determined. Post-translationally, O-linked glycan at Ser-120 may be composed of two GalNAc, three Gal, and two N-acetylneuraminic acid units for a total 1525-Da MW. Hemolymph.

It is found in the secreted. Its subcellular location is the extracellular space. Functionally, hemocyanins are copper-containing oxygen carriers occurring freely dissolved in the hemolymph of many mollusks and arthropods. In Carcinus aestuarii (Green crab), this protein is Hemocyanin subunit 2.